Here is a 247-residue protein sequence, read N- to C-terminus: Adenosylcobinamide-GDP ribazoletransferase (247 aa).

6 helical membrane-spanning segments follow: residues 34-54, 59-79, 113-133, 138-158, 171-193, and 194-214; these read IVTFPLIGMLLGAIGGLVFVA, CGIPLAALFCVLTLALLTGGF, GGLALIFVLLAKVLVISELAL, MLAALAMACAAGRGVAVLLMY, VFIGKVTGRQTCVTLGLTAILAA, and ILMPGMHGVAALVVTLAAIFI.

This sequence belongs to the CobS family. Mg(2+) serves as cofactor.

The protein localises to the cell inner membrane. It carries out the reaction alpha-ribazole + adenosylcob(III)inamide-GDP = adenosylcob(III)alamin + GMP + H(+). The enzyme catalyses alpha-ribazole 5'-phosphate + adenosylcob(III)inamide-GDP = adenosylcob(III)alamin 5'-phosphate + GMP + H(+). The protein operates within cofactor biosynthesis; adenosylcobalamin biosynthesis; adenosylcobalamin from cob(II)yrinate a,c-diamide: step 7/7. Functionally, joins adenosylcobinamide-GDP and alpha-ribazole to generate adenosylcobalamin (Ado-cobalamin). Also synthesizes adenosylcobalamin 5'-phosphate from adenosylcobinamide-GDP and alpha-ribazole 5'-phosphate. The chain is Adenosylcobinamide-GDP ribazoletransferase from Citrobacter koseri (strain ATCC BAA-895 / CDC 4225-83 / SGSC4696).